The primary structure comprises 867 residues: MGRGPPAVLAPWMLFLSLAQANFAPHFFDNGAGSTNGNMALFSLPEDTPVGSHVYTLNGTDPEGDPVSYHISFNPSARSVFSVDPNLGNITLIEELDREREDEIEAIISISDGLNLVAEKVTILVTDANDEAPRFIQEPYVVQVPEDTPSGSSIARVRAVDRDTGSAGSVTYFLKNPHPTEFSVDRHSGVLRLRAGAILDFEKARAHFVTVVAKDGGGKLRGADVVLSATTVVTVNVEDVQDMGPVFVGTPYYGYVYEDTLPGSEVLMVVAMDGDRGKPNRVLYSLVNGSDGAFEINETSGAISVMQSPSQLRREVYELHVQVTEVSSAGTPAAQAMVPVTIRIVDLNNHPPTFYGESGPQNRFELSMYEHPPQGEILRGLKITVNDSDQGANAKFNLRLVGPGGIFRVVPQTVLNEAQVTIIVENSAAIDFEKSKVLTFKLLAIEVNTPEKFSSTADVVIQLLDTNDNVPKFTSHYYVARIPENAPGGSNVLAVTAVDPDSGPWGEVKYSIYGSGADLFLIHPSSGIIYTQPWASLDAEATARYNFYVKAEDMEGRYSLAEVFITLLDVNDHYPQFGKSVQEKTMVLGTPVKIEATDQDAEEPNNLVDYSITHAEPANVFDINAHTGEIWLKNSIRSLDALHNITPSGDRTWSLEVQAKDRGSPSFSTTALLKIDIVDTEMLSRSPMAAFLMQTKDNPMKAVGVLAGIMAIIVAITVLISTATFWRNKKSNKVQPVRRVLRKRPSPAPRSVRIEWLKFRRTKAADKFVLREAPPNENCNNNSRGSTPAPQAPAPPPPPSPAPSVGQAPWTVPTVSGSLAPQQPQQPSPKPRAVAKRKAVGSPVQSALVSELRQKFEKKNLHSKAYF.

An N-terminal signal peptide occupies residues 1 to 21; it reads MGRGPPAVLAPWMLFLSLAQA. The Extracellular segment spans residues 22-701; that stretch reads NFAPHFFDNG…LMQTKDNPMK (680 aa). 6 consecutive Cadherin domains span residues 36–135, 136–247, 248–354, 360–473, 474–577, and 574–689; these read NGNM…APRF, IQEP…GPVF, VGTP…PPTF, PQNR…VPKF, TSHY…YPQF, and YPQF…SPMA. N-linked (GlcNAc...) asparagine glycosylation is found at Asn-58 and Asn-89. 2 N-linked (GlcNAc...) asparagine glycosylation sites follow: Asn-288 and Asn-297. Residues 702–722 form a helical membrane-spanning segment; that stretch reads AVGVLAGIMAIIVAITVLIST. Residues 723-867 lie on the Cytoplasmic side of the membrane; sequence ATFWRNKKSN…KKNLHSKAYF (145 aa). The tract at residues 767 to 843 is disordered; that stretch reads KFVLREAPPN…VAKRKAVGSP (77 aa). Polar residues predominate over residues 777–786; the sequence is ENCNNNSRGS. The segment covering 790–802 has biased composition (pro residues); sequence PQAPAPPPPPSPA.

As to quaternary structure, interacts with PROM1. In terms of processing, undergoes proteolytic cleavage; produces a soluble 95 kDa N-terminal fragment and a 25 kDa cell-associated C-terminal fragment. In terms of tissue distribution, expressed in photoreceptor cells of the outer nuclear layer of the retina.

It is found in the cell membrane. Its function is as follows. Potential calcium-dependent cell-adhesion protein. May be required for the structural integrity of the outer segment (OS) of photoreceptor cells. This chain is Cadherin-related family member 1 (CDHR1), found in Bos taurus (Bovine).